The chain runs to 564 residues: Ubiquitin carboxyl-terminal hydrolase 39 (564 aa).

Residues 1–96 (MSSRSKRQSH…VRAKNGRVDS (96 aa)) form a disordered region. Over residues 28–39 (IKKERDREKEPE) the composition is skewed to basic and acidic residues. Ser46 is modified (phosphoserine). A Glycyl lysine isopeptide (Lys-Gly) (interchain with G-Cter in SUMO2) cross-link involves residue Lys51. The segment covering 59 to 69 (REVPAPALPVV) has biased composition (low complexity). Ser81 carries the phosphoserine modification. Residues 84-96 (EREVRAKNGRVDS) show a composition bias toward basic and acidic residues. The segment at 102–199 (RHCPYLDTIN…YVLKPTFTKQ (98 aa)) adopts a UBP-type; degenerate zinc-finger fold. Residues Cys135, Cys138, His154, and His160 each contribute to the Zn(2+) site. The USP domain occupies 224–554 (VGLNNIKAND…EAYIQIWKRR (331 aa)).

The protein belongs to the peptidase C19 family. The U4/U6-U5 tri-snRNP complex is a building block of the precatalytic spliceosome (spliceosome B complex). Component of the U4/U6-U5 tri-snRNP complex composed of the U4, U6 and U5 snRNAs and at least PRPF3, PRPF4, PRPF6, PRPF8, PRPF31, SNRNP200, TXNL4A, SNRNP40, SNRPB, SNRPD1, SNRPD2, SNRPD3, SNRPE, SNRPF, SNRPG, DDX23, CD2BP2, PPIH, SNU13, EFTUD2, SART1 and USP39, plus LSM2, LSM3, LSM4, LSM5, LSM6, LSM7 and LSM8.

The protein resides in the nucleus. The catalysed reaction is Thiol-dependent hydrolysis of ester, thioester, amide, peptide and isopeptide bonds formed by the C-terminal Gly of ubiquitin (a 76-residue protein attached to proteins as an intracellular targeting signal).. Functionally, deubiquitinating enzyme that plays a role in many cellular processes including cellular antiviral response, epithelial morphogenesis, DNA repair or B-cell development. Plays a role in pre-mRNA splicing as a component of the U4/U6-U5 tri-snRNP, one of the building blocks of the precatalytic spliceosome. Specifically regulates immunoglobulin gene rearrangement in a spliceosome-dependent manner, which involves modulating chromatin interactions at the Igh locus and therefore plays an essential role in B-cell development. Regulates AURKB mRNA levels, and thereby plays a role in cytokinesis and in the spindle checkpoint. Regulates apoptosis and G2/M cell cycle checkpoint in response to DNA damage by deubiquitinating and stabilizing CHK2. Also plays an important role in DNA repair by controlling the recruitment of XRCC4/LIG4 to DNA double-strand breaks for non-homologous end-joining repair. Participates in antiviral activity by affecting the type I IFN signaling by stabilizing STAT1 and decreasing its 'Lys-6'-linked ubiquitination. Contributes to non-canonical Wnt signaling during epidermal differentiation. Acts as a negative regulator NF-kappa-B activation through deubiquitination of 'Lys-48'-linked ubiquitination of NFKBIA. The chain is Ubiquitin carboxyl-terminal hydrolase 39 from Mus musculus (Mouse).